Consider the following 570-residue polypeptide: Membrane protein insertase YidC (570 aa).

A compositionally biased stretch (polar residues) spans 31 to 60 (QQPVAQTPSVTIDSNGADSSALLNSPNTGE). The tract at residues 31 to 79 (QQPVAQTPSVTIDSNGADSSALLNSPNTGELDTPETASKPATAEDSNIS) is disordered. 5 helical membrane-spanning segments follow: residues 230–250 (PTFS…STPE), 378–398 (WGIA…HLSA), 444–464 (LGGC…YWVL), 487–507 (PYFV…SLNP), and 522–542 (PIIF…YWLV).

The protein belongs to the OXA1/ALB3/YidC family. Type 1 subfamily. As to quaternary structure, interacts with the Sec translocase complex via SecD. Specifically interacts with transmembrane segments of nascent integral membrane proteins during membrane integration.

The protein localises to the cell inner membrane. In terms of biological role, required for the insertion and/or proper folding and/or complex formation of integral membrane proteins into the membrane. Involved in integration of membrane proteins that insert both dependently and independently of the Sec translocase complex, as well as at least some lipoproteins. Aids folding of multispanning membrane proteins. In Hahella chejuensis (strain KCTC 2396), this protein is Membrane protein insertase YidC.